A 350-amino-acid polypeptide reads, in one-letter code: Mitogen-activated protein kinase HOG1 (350 aa).

Positions 20–299 (YTDLQPVGMG…AAQALAHEYL (280 aa)) constitute a Protein kinase domain. ATP-binding positions include 26–34 (VGMGAFGLV) and K49. The active-site Proton acceptor is D141. The TXY signature appears at 171-173 (TGY).

This sequence belongs to the protein kinase superfamily. Ser/Thr protein kinase family. MAP kinase subfamily. HOG1 sub-subfamily. It depends on Mg(2+) as a cofactor.

It is found in the cytoplasm. Its subcellular location is the nucleus. It carries out the reaction L-seryl-[protein] + ATP = O-phospho-L-seryl-[protein] + ADP + H(+). The catalysed reaction is L-threonyl-[protein] + ATP = O-phospho-L-threonyl-[protein] + ADP + H(+). In terms of biological role, proline-directed serine/threonine-protein kinase involved in a signal transduction pathway that is activated by changes in the osmolarity of the extracellular environment. Controls osmotic regulation of transcription of target genes. Involved in environmental stress response. Via the downstream MSN2 transcription factor, may play roles in the regulation of growth, conidiation, trap development, fatty acid metabolism and secondary metabolites biosynthesis. This Arthrobotrys oligospora (strain ATCC 24927 / CBS 115.81 / DSM 1491) (Nematode-trapping fungus) protein is Mitogen-activated protein kinase HOG1.